A 450-amino-acid chain; its full sequence is Tubulin alpha chain, testis-specific (450 aa).

The MREC motif motif lies at 1 to 4 (MREC). Residue Q11 participates in GTP binding. K40 is modified (N6-acetyllysine). GTP-binding residues include E71, S140, G144, T145, T179, N206, and N228. E71 provides a ligand contact to Mg(2+). Residue E254 is part of the active site.

This sequence belongs to the tubulin family. In terms of assembly, dimer of alpha and beta chains. A typical microtubule is a hollow water-filled tube with an outer diameter of 25 nm and an inner diameter of 15 nM. Alpha-beta heterodimers associate head-to-tail to form protofilaments running lengthwise along the microtubule wall with the beta-tubulin subunit facing the microtubule plus end conferring a structural polarity. Microtubules usually have 13 protofilaments but different protofilament numbers can be found in some organisms and specialized cells. It depends on Mg(2+) as a cofactor. In terms of processing, some glutamate residues at the C-terminus are polyglycylated, resulting in polyglycine chains on the gamma-carboxyl group. Glycylation is mainly limited to tubulin incorporated into axonemes (cilia and flagella) whereas glutamylation is prevalent in neuronal cells, centrioles, axonemes, and the mitotic spindle. Both modifications can coexist on the same protein on adjacent residues, and lowering polyglycylation levels increases polyglutamylation, and reciprocally. The precise function of polyglycylation is still unclear. Post-translationally, some glutamate residues at the C-terminus are polyglutamylated, resulting in polyglutamate chains on the gamma-carboxyl group. Polyglutamylation plays a key role in microtubule severing by spastin (SPAST). SPAST preferentially recognizes and acts on microtubules decorated with short polyglutamate tails: severing activity by SPAST increases as the number of glutamates per tubulin rises from one to eight, but decreases beyond this glutamylation threshold. Acetylation of alpha chains at Lys-40 is located inside the microtubule lumen. This modification has been correlated with increased microtubule stability, intracellular transport and ciliary assembly. In terms of processing, undergoes a tyrosination/detyrosination cycle, the cyclic removal and re-addition of a C-terminal tyrosine residue by the enzymes tubulin tyrosine carboxypeptidase (MATCAP, VASH1 or VASH2) and tubulin tyrosine ligase (TTL), respectively. Post-translationally, tyrosination promotes microtubule interaction with CAP-Gly microtubule plus-end tracking proteins. Tyrosinated tubulins regulate the initiation of dynein-driven motility. Detyrosination is involved in metaphase plate congression by guiding chromosomes during mitosis. Detyrosination increases microtubules-dependent mechanotransduction in dystrophic cardiac and skeletal muscle. In cardiomyocytes, detyrosinated microtubules are required to resist to contractile compression during contraction. As to expression, testis specific.

It is found in the cytoplasm. The protein resides in the cytoskeleton. It catalyses the reaction GTP + H2O = GDP + phosphate + H(+). Its function is as follows. Tubulin is the major constituent of microtubules, a cylinder consisting of laterally associated linear protofilaments composed of alpha- and beta-tubulin heterodimers. Microtubules grow by the addition of GTP-tubulin dimers to the microtubule end, where a stabilizing cap forms. Below the cap, tubulin dimers are in GDP-bound state, owing to GTPase activity of alpha-tubulin. The chain is Tubulin alpha chain, testis-specific from Oncorhynchus mykiss (Rainbow trout).